The primary structure comprises 296 residues: 4-hydroxybenzoate octaprenyltransferase (296 aa).

Helical transmembrane passes span 29-49, 52-72, 102-122, 146-166, 169-189, 219-239, 241-261, and 275-295; these read IGVYLLLWPTLWAVWIAGKGA, LQTVCIFVLGVFLMRAAGCVI, ALVLFAVLVGLSFVLVLFTNA, YYPQVVLGAAFSWGMPMAFTA, GELPAAAWLLYIANLLWTVGY, VIILTLQGLALGCLMLAGARF, LGACFYIGLLAAAGCFAWEFW, and FLHNHWAGLAIFLGIVADYAV.

Belongs to the UbiA prenyltransferase family. The cofactor is Mg(2+).

The protein localises to the cell inner membrane. The catalysed reaction is all-trans-octaprenyl diphosphate + 4-hydroxybenzoate = 4-hydroxy-3-(all-trans-octaprenyl)benzoate + diphosphate. It functions in the pathway cofactor biosynthesis; ubiquinone biosynthesis. Catalyzes the prenylation of para-hydroxybenzoate (PHB) with an all-trans polyprenyl group. Mediates the second step in the final reaction sequence of ubiquinone-8 (UQ-8) biosynthesis, which is the condensation of the polyisoprenoid side chain with PHB, generating the first membrane-bound Q intermediate 3-octaprenyl-4-hydroxybenzoate. The polypeptide is 4-hydroxybenzoate octaprenyltransferase (Pseudomonas syringae pv. syringae (strain B728a)).